We begin with the raw amino-acid sequence, 517 residues long: Shugoshin 1 (517 aa).

Residues 1 to 89 (MAKERCQKRS…DVILQLRKEC (89 aa)) adopt a coiled-coil conformation. The tract at residues 1-176 (MAKERCQKRS…DFDSGKVEST (176 aa)) is necessary for interaction with PPP2CA and PPP2R1A. 4 disordered regions span residues 107 to 136 (QSEE…LSGK), 149 to 173 (PYQT…SGKV), 267 to 317 (PEQI…TLDG), and 334 to 427 (HPTP…QESP). Residues 268 to 291 (EQIESKHKRARKRRAEQRRTKQRC) are a coiled coil. Residues 273-302 (KHKRARKRRAEQRRTKQRCKSKSSLRSKGN) are compositionally biased toward basic residues. Residues 341–363 (KMNNGCNKETDSSNSEVSDLECS) are compositionally biased toward polar residues. The span at 379–390 (RLRDYRESERAV) shows a compositional bias: basic and acidic residues. The residue at position 426 (serine 426) is a Phosphoserine. A PXVXL/I motif motif is present at residues 441–445 (PRVKI). The D-box signature appears at 447-455 (KPSLPPKRR). Serine 497 bears the Phosphoserine; by NEK2 mark.

It belongs to the shugoshin family. In terms of assembly, interacts with PPP2CA (or PPP2CB), PPP2R1B, PPP2R5A, PPP2R5B, PPP2R5C, PPP2R5D, PPP2R5E, SET, LRRC59, RBM10 (or RBM5), RPL10A, RPL28, RPL7, RPL7A and RPLP1. Interaction with protein phosphatase 2A occurs most probably through direct binding to the regulatory B56 subunits: PPP2R1B, PPP2R5A, PPP2R5B, PPP2R5C, PPP2R5D, PPP2R5E. Interacts with PPP2R1A and NEK2. Interacts with CDCA8. In terms of processing, ubiquitinated and degraded during mitotic exit by APC/C-Cdh1. Post-translationally, phosphorylation by NEK2 is essential for chromosome congression in mitosis and for the proper attachment of spindle microtubule to the kinetochore. Phosphorylated by PLK1 and AUKRB. In terms of tissue distribution, ubiquitously expressed in proliferating cells. Moderately expressed in the oocytes.

It localises to the nucleus. The protein resides in the chromosome. It is found in the centromere. The protein localises to the kinetochore. Its subcellular location is the cytoplasm. It localises to the cytoskeleton. The protein resides in the spindle pole. It is found in the microtubule organizing center. The protein localises to the centrosome. Its subcellular location is the nucleus speckle. Plays a central role in chromosome cohesion during mitosis by preventing premature dissociation of cohesin complex from centromeres after prophase, when most of cohesin complex dissociates from chromosomes arms. May act by preventing phosphorylation of the STAG2 subunit of cohesin complex at the centromere, ensuring cohesin persistence at centromere until cohesin cleavage by ESPL1/separase at anaphase. Essential for proper chromosome segregation during mitosis and this function requires interaction with PPP2R1A. Its phosphorylated form is necessary for chromosome congression and for the proper attachment of spindle microtubule to the kinetochore. Necessary for kinetochore localization of PLK1 and CENPF. May play a role in the tension sensing mechanism of the spindle-assembly checkpoint by regulating PLK1 kinetochore affinity. Involved in centromeric enrichment of AUKRB in prometaphase. The protein is Shugoshin 1 of Mus musculus (Mouse).